The sequence spans 72 residues: Translation initiation factor IF-1 (72 aa).

The S1-like domain maps to 1–72 (MSKEEVLEFS…TKGRITYRYK (72 aa)).

This sequence belongs to the IF-1 family. Component of the 30S ribosomal translation pre-initiation complex which assembles on the 30S ribosome in the order IF-2 and IF-3, IF-1 and N-formylmethionyl-tRNA(fMet); mRNA recruitment can occur at any time during PIC assembly.

The protein localises to the cytoplasm. Its function is as follows. One of the essential components for the initiation of protein synthesis. Stabilizes the binding of IF-2 and IF-3 on the 30S subunit to which N-formylmethionyl-tRNA(fMet) subsequently binds. Helps modulate mRNA selection, yielding the 30S pre-initiation complex (PIC). Upon addition of the 50S ribosomal subunit IF-1, IF-2 and IF-3 are released leaving the mature 70S translation initiation complex. This chain is Translation initiation factor IF-1, found in Bartonella tribocorum (strain CIP 105476 / IBS 506).